The chain runs to 401 residues: 8-amino-7-oxononanoate synthase (401 aa).

Position 24 (R24) interacts with substrate. 111–112 contacts pyridoxal 5'-phosphate; it reads GF. A substrate-binding site is contributed by H137. Residues S183, H211, and T240 each coordinate pyridoxal 5'-phosphate. K243 is subject to N6-(pyridoxal phosphate)lysine. T357 is a substrate binding site.

The protein belongs to the class-II pyridoxal-phosphate-dependent aminotransferase family. BioF subfamily. In terms of assembly, homodimer. Pyridoxal 5'-phosphate serves as cofactor.

The enzyme catalyses 6-carboxyhexanoyl-[ACP] + L-alanine + H(+) = (8S)-8-amino-7-oxononanoate + holo-[ACP] + CO2. It participates in cofactor biosynthesis; biotin biosynthesis. Functionally, catalyzes the decarboxylative condensation of pimeloyl-[acyl-carrier protein] and L-alanine to produce 8-amino-7-oxononanoate (AON), [acyl-carrier protein], and carbon dioxide. The sequence is that of 8-amino-7-oxononanoate synthase from Xanthomonas euvesicatoria pv. vesicatoria (strain 85-10) (Xanthomonas campestris pv. vesicatoria).